The sequence spans 550 residues: Dihydroxy-acid dehydratase (550 aa).

Asp-78 lines the Mg(2+) pocket. Residue Cys-119 coordinates [2Fe-2S] cluster. Mg(2+)-binding residues include Asp-120 and Lys-121. Residue Lys-121 is modified to N6-carboxylysine. Cys-191 contacts [2Fe-2S] cluster. Glu-440 contacts Mg(2+). Ser-466 acts as the Proton acceptor in catalysis.

Belongs to the IlvD/Edd family. Homodimer. Requires [2Fe-2S] cluster as cofactor. Mg(2+) is required as a cofactor.

It catalyses the reaction (2R)-2,3-dihydroxy-3-methylbutanoate = 3-methyl-2-oxobutanoate + H2O. The enzyme catalyses (2R,3R)-2,3-dihydroxy-3-methylpentanoate = (S)-3-methyl-2-oxopentanoate + H2O. Its pathway is amino-acid biosynthesis; L-isoleucine biosynthesis; L-isoleucine from 2-oxobutanoate: step 3/4. The protein operates within amino-acid biosynthesis; L-valine biosynthesis; L-valine from pyruvate: step 3/4. Functions in the biosynthesis of branched-chain amino acids. Catalyzes the dehydration of (2R,3R)-2,3-dihydroxy-3-methylpentanoate (2,3-dihydroxy-3-methylvalerate) into 2-oxo-3-methylpentanoate (2-oxo-3-methylvalerate) and of (2R)-2,3-dihydroxy-3-methylbutanoate (2,3-dihydroxyisovalerate) into 2-oxo-3-methylbutanoate (2-oxoisovalerate), the penultimate precursor to L-isoleucine and L-valine, respectively. This Methanococcus maripaludis (strain DSM 14266 / JCM 13030 / NBRC 101832 / S2 / LL) protein is Dihydroxy-acid dehydratase.